Here is a 415-residue protein sequence, read N- to C-terminus: Krueppel-like factor 15 (415 aa).

Residues 75–83 carry the 9aaTAD motif; that stretch reads SILDFLLSR. The tract at residues 172–216 is disordered; that stretch reads LSAGSHRSHLHPESAGRERCTPPPGGTSGGGAQSAGEGPAHDGPV. Over residues 181 to 191 the composition is skewed to basic and acidic residues; that stretch reads LHPESAGRERC. 3 consecutive C2H2-type zinc fingers follow at residues 320–344, 350–374, and 380–402; these read HKCT…LRRH, FACT…RRSH, and YQCP…IKVH.

It belongs to the Sp1 C2H2-type zinc-finger protein family. Interacts with MYOCD. Interacts with EP300. Expressed in aortic smooth muscle cells.

It is found in the nucleus. In terms of biological role, transcriptional regulator that binds to the GA element of the CLCNKA promoter. Binds to the KCNIP2 promoter and regulates KCNIP2 circadian expression in the heart. Is a repressor of CCN2 expression, involved in the control of cardiac fibrosis. Is also involved in the control of cardiac hypertrophy acting through the inhibition of MEF2A, GATA4 and MYOCD activity. Is a negative regulator of TP53 acetylation. Inhibits NF-kappa-B activation through repression of EP300-dependent RELA acetylation. Involved in podocyte differentiation. The sequence is that of Krueppel-like factor 15 (Klf15) from Mus musculus (Mouse).